The chain runs to 49 residues: Large ribosomal subunit protein bL33B (49 aa).

The protein belongs to the bacterial ribosomal protein bL33 family.

In terms of biological role, plays a role in sporulation at high temperatures. The chain is Large ribosomal subunit protein bL33B (rpmGB) from Bacillus subtilis (strain 168).